Here is a 501-residue protein sequence, read N- to C-terminus: 5-beta-cholestane-3-alpha,7-alpha-diol 12-alpha-hydroxylase (501 aa).

The chain crosses the membrane as a helical span at residues 1–21 (MVLWGPVLGVLLVAIVGYLCL). Ser-326 is modified (phosphoserine). Residue Cys-440 coordinates heme.

It belongs to the cytochrome P450 family. Heme serves as cofactor.

The protein resides in the endoplasmic reticulum membrane. It is found in the microsome membrane. It catalyses the reaction 7alpha-hydroxycholest-4-en-3-one + reduced [NADPH--hemoprotein reductase] + O2 = 7alpha,12alpha-dihydroxycholest-4-en-3-one + oxidized [NADPH--hemoprotein reductase] + H2O + H(+). It carries out the reaction 5beta-cholestane-3alpha,7alpha-diol + reduced [NADPH--hemoprotein reductase] + O2 = 5beta-cholestane-3alpha,7alpha,12alpha-triol + oxidized [NADPH--hemoprotein reductase] + H2O + H(+). The enzyme catalyses chenodeoxycholate + reduced [NADPH--hemoprotein reductase] + O2 = cholate + oxidized [NADPH--hemoprotein reductase] + H2O + H(+). Its pathway is lipid metabolism; bile acid biosynthesis. In terms of biological role, a cytochrome P450 monooxygenase involved in primary bile acid biosynthesis. Catalyzes the 12alpha-hydroxylation of 7alpha-hydroxy-4-cholesten-3-one, an intermediate metabolite in cholic acid biosynthesis. Controls biliary balance of cholic acid and chenodeoxycholic acid, ultimately regulating the intestinal absorption of dietary lipids. Mechanistically, uses molecular oxygen inserting one oxygen atom into a substrate, and reducing the second into a water molecule, with two electrons provided by NADPH via cytochrome P450 reductase (CPR; NADPH--hemoprotein reductase). The chain is 5-beta-cholestane-3-alpha,7-alpha-diol 12-alpha-hydroxylase (CYP8B1) from Sus scrofa (Pig).